Consider the following 201-residue polypeptide: Transmembrane 4 L6 family member 18 (201 aa).

Topologically, residues 1-9 (MGSRKCGGC) are cytoplasmic. Residues 10 to 30 (LSCLLIPLALWSIIVNILLYF) traverse the membrane as a helical segment. Residues 31-49 (PNGQTSYASSNKLTNYVWY) are Extracellular-facing. The helical transmembrane segment at 50–70 (FEGICFSGIMMLIVTTVLLVL) threads the bilayer. The Cytoplasmic segment spans residues 71–93 (ENNNNYKCCQSENCSKKYVTLLS). A helical transmembrane segment spans residues 94-114 (IIFSSLGIAFSGYCLVISALG). Residues 115–157 (LVQGPYCRTLDGWEYAFEGTAGRFLTDSSIWIQCLEPAHVVEW) lie on the Extracellular side of the membrane. Residues 158-178 (NIILFSILITLSGLQVIICLI) traverse the membrane as a helical segment. Residues 179–201 (RVVMQLSKILCGSYSVIFQPGII) are Cytoplasmic-facing.

It belongs to the L6 tetraspanin family.

The protein localises to the membrane. The polypeptide is Transmembrane 4 L6 family member 18 (TM4SF18) (Homo sapiens (Human)).